A 518-amino-acid polypeptide reads, in one-letter code: GMP synthase [glutamine-hydrolyzing] (518 aa).

One can recognise a Glutamine amidotransferase type-1 domain in the interval threonine 8–asparagine 201. Catalysis depends on cysteine 85, which acts as the Nucleophile. Catalysis depends on residues histidine 175 and glutamate 177. The GMPS ATP-PPase domain occupies tryptophan 202–arginine 393. Serine 229–serine 235 contributes to the ATP binding site.

In terms of assembly, homodimer.

The catalysed reaction is XMP + L-glutamine + ATP + H2O = GMP + L-glutamate + AMP + diphosphate + 2 H(+). The protein operates within purine metabolism; GMP biosynthesis; GMP from XMP (L-Gln route): step 1/1. In terms of biological role, catalyzes the synthesis of GMP from XMP. This chain is GMP synthase [glutamine-hydrolyzing], found in Bartonella quintana (strain Toulouse) (Rochalimaea quintana).